The following is a 123-amino-acid chain: Small ribosomal subunit protein uS12 (123 aa).

Aspartate 89 is subject to 3-methylthioaspartic acid.

This sequence belongs to the universal ribosomal protein uS12 family. In terms of assembly, part of the 30S ribosomal subunit. Contacts proteins S8 and S17. May interact with IF1 in the 30S initiation complex.

Its function is as follows. With S4 and S5 plays an important role in translational accuracy. Functionally, interacts with and stabilizes bases of the 16S rRNA that are involved in tRNA selection in the A site and with the mRNA backbone. Located at the interface of the 30S and 50S subunits, it traverses the body of the 30S subunit contacting proteins on the other side and probably holding the rRNA structure together. The combined cluster of proteins S8, S12 and S17 appears to hold together the shoulder and platform of the 30S subunit. The protein is Small ribosomal subunit protein uS12 of Bartonella bacilliformis (strain ATCC 35685 / KC583 / Herrer 020/F12,63).